Reading from the N-terminus, the 171-residue chain is MNYSIVMFPSKPFQDTANGYRRRYDAHYANIPPHITLKERFSIAEEERSKIIKALRTIGQTHKPIAIDVYKVDTFYPQSTTIYYKIKENDRLLALYEALHRDPFPRKRAHPVFVPHITIAQGLPQSEHADIVGQLKMIDVSHQETIDRFQLLKQLDNGSWAVYETFLLEGD.

The active-site Proton donor is the H34. Short sequence motifs (HXTX) lie at residues 34–37 (HITL) and 116–119 (HITI). H116 serves as the catalytic Proton acceptor.

This sequence belongs to the 2H phosphoesterase superfamily. YjcG family.

The sequence is that of Putative phosphoesterase ABC1741 from Shouchella clausii (strain KSM-K16) (Alkalihalobacillus clausii).